Here is a 286-residue protein sequence, read N- to C-terminus: Polyamine aminopropyltransferase (286 aa).

The region spanning Thr-5–Asp-238 is the PABS domain. Gln-33 is a binding site for S-methyl-5'-thioadenosine. The spermidine site is built by His-64 and Asp-88. Residues Glu-108 and Asp-140–Gly-141 each bind S-methyl-5'-thioadenosine. Catalysis depends on Asp-158, which acts as the Proton acceptor. Asp-158–Asp-161 contributes to the spermidine binding site. Pro-165 contacts S-methyl-5'-thioadenosine.

This sequence belongs to the spermidine/spermine synthase family. Homodimer or homotetramer.

It is found in the cytoplasm. It catalyses the reaction S-adenosyl 3-(methylsulfanyl)propylamine + putrescine = S-methyl-5'-thioadenosine + spermidine + H(+). The protein operates within amine and polyamine biosynthesis; spermidine biosynthesis; spermidine from putrescine: step 1/1. Catalyzes the irreversible transfer of a propylamine group from the amino donor S-adenosylmethioninamine (decarboxy-AdoMet) to putrescine (1,4-diaminobutane) to yield spermidine. This chain is Polyamine aminopropyltransferase, found in Salmonella schwarzengrund (strain CVM19633).